A 480-amino-acid chain; its full sequence is MNVLSVSSEIYPLIKTGGLADVVGALPIALEAHGVRTRTLIPGYPAVKAAVTDPVKCFEFTDLLGEKADLLEVQHERLDLLILDAPAYYERSGGPYLGQTGKDYPDNWKRFAALSLAAARIGAGVLPGWRPDMVHAHDWQAAMTPVYMRYAETPEIPSLLTIHNIAFQGQFGANIFSKLALPAHAFGMEGIEYYNDVSFLKGGLQTATALSTVSPSYAEEILTAEFGMGLEGVIGSRAHVLHGIVNGIDADVWNPATDHLIHDNYSAANLKNRALNKKAVAEHFRIDDDGSPLFCVISRLTWQKGIDLMAEAVDEIVSLGGRLVVLGAGDVALEGALLAAASRHHGRVGVAIGYNEPLSHLMQAGCDAIIIPSRFEPCGLTQLYALRYGCIPVVARTGGLADTVIDANHAALASKAATGVQFSPVTLDGLKQAIRRTVRYYHDPKLWTQMQKLGMKSDVSWEKSAGLYAALYSQLISKGH.

K15 lines the ADP-alpha-D-glucose pocket.

The protein belongs to the glycosyltransferase 1 family. Bacterial/plant glycogen synthase subfamily.

It carries out the reaction [(1-&gt;4)-alpha-D-glucosyl](n) + ADP-alpha-D-glucose = [(1-&gt;4)-alpha-D-glucosyl](n+1) + ADP + H(+). Its pathway is glycan biosynthesis; glycogen biosynthesis. Its function is as follows. Synthesizes alpha-1,4-glucan chains using ADP-glucose. This chain is Glycogen synthase 1 (glgA1), found in Rhizobium radiobacter (Agrobacterium tumefaciens).